Reading from the N-terminus, the 230-residue chain is Cytidylate kinase (230 aa).

12–20 is an ATP binding site; it reads GPSGAGKGT.

This sequence belongs to the cytidylate kinase family. Type 1 subfamily.

The protein localises to the cytoplasm. It carries out the reaction CMP + ATP = CDP + ADP. The catalysed reaction is dCMP + ATP = dCDP + ADP. The chain is Cytidylate kinase from Yersinia pseudotuberculosis serotype O:1b (strain IP 31758).